Reading from the N-terminus, the 95-residue chain is Integration host factor subunit beta (95 aa).

This sequence belongs to the bacterial histone-like protein family. In terms of assembly, heterodimer of an alpha and a beta chain.

In terms of biological role, this protein is one of the two subunits of integration host factor, a specific DNA-binding protein that functions in genetic recombination as well as in transcriptional and translational control. The protein is Integration host factor subunit beta of Ruegeria sp. (strain TM1040) (Silicibacter sp.).